The following is an 80-amino-acid chain: Cell division protein ZapB (80 aa).

The stretch at 3–80 (FEVLEKLEAK…ALLGKMEDVE (78 aa)) forms a coiled coil.

This sequence belongs to the ZapB family. Homodimer. The ends of the coiled-coil dimer bind to each other, forming polymers. Interacts with FtsZ.

It localises to the cytoplasm. Its function is as follows. Non-essential, abundant cell division factor that is required for proper Z-ring formation. It is recruited early to the divisome by direct interaction with FtsZ, stimulating Z-ring assembly and thereby promoting cell division earlier in the cell cycle. Its recruitment to the Z-ring requires functional FtsA or ZipA. In Vibrio vulnificus (strain CMCP6), this protein is Cell division protein ZapB.